Consider the following 372-residue polypeptide: tRNA N6-adenosine threonylcarbamoyltransferase (372 aa).

Positions 133, 137, and 154 each coordinate a divalent metal cation. Substrate-binding positions include 154–158 (YVSGG), Asp186, Gly201, Glu205, and Asn301. Asp330 provides a ligand contact to a divalent metal cation.

The protein belongs to the KAE1 / TsaD family. Component of the EKC/KEOPS complex composed of at least BUD32, CGI121, GON7, KAE1 and PCC1; the whole complex dimerizes. It depends on a divalent metal cation as a cofactor.

The protein resides in the cytoplasm. Its subcellular location is the nucleus. The enzyme catalyses L-threonylcarbamoyladenylate + adenosine(37) in tRNA = N(6)-L-threonylcarbamoyladenosine(37) in tRNA + AMP + H(+). Functionally, component of the EKC/KEOPS complex that is required for the formation of a threonylcarbamoyl group on adenosine at position 37 (t(6)A37) in tRNAs that read codons beginning with adenine. The complex is probably involved in the transfer of the threonylcarbamoyl moiety of threonylcarbamoyl-AMP (TC-AMP) to the N6 group of A37. KAE1 likely plays a direct catalytic role in this reaction, but requires other protein(s) of the complex to fulfill this activity. The EKC/KEOPS complex also promotes both telomere uncapping and telomere elongation. The complex is required for efficient recruitment of transcriptional coactivators. This chain is tRNA N6-adenosine threonylcarbamoyltransferase, found in Candida albicans (strain SC5314 / ATCC MYA-2876) (Yeast).